The following is a 100-amino-acid chain: NADH-quinone oxidoreductase subunit K (100 aa).

Transmembrane regions (helical) follow at residues 2–22 (VTLNHYLILSSLLFMIGLVGV), 28–48 (LLMLFFSTEIMLNAVNVGLVA), and 63–83 (FFIIAVAASEVAVGLGLLILW).

Belongs to the complex I subunit 4L family. As to quaternary structure, NDH-1 is composed of 14 different subunits. Subunits NuoA, H, J, K, L, M, N constitute the membrane sector of the complex.

Its subcellular location is the cell inner membrane. The enzyme catalyses a quinone + NADH + 5 H(+)(in) = a quinol + NAD(+) + 4 H(+)(out). Functionally, NDH-1 shuttles electrons from NADH, via FMN and iron-sulfur (Fe-S) centers, to quinones in the respiratory chain. The immediate electron acceptor for the enzyme in this species is believed to be ubiquinone. Couples the redox reaction to proton translocation (for every two electrons transferred, four hydrogen ions are translocated across the cytoplasmic membrane), and thus conserves the redox energy in a proton gradient. This chain is NADH-quinone oxidoreductase subunit K, found in Wolinella succinogenes (strain ATCC 29543 / DSM 1740 / CCUG 13145 / JCM 31913 / LMG 7466 / NCTC 11488 / FDC 602W) (Vibrio succinogenes).